Here is a 1897-residue protein sequence, read N- to C-terminus: Spectinabilin polyketide synthase system protein NorA (1897 aa).

The region spanning 112–536 is the Ketosynthase family 3 (KS3) domain; that stretch reads EEPIAIVGMG…GTNAHIILEQ (425 aa). Active-site for beta-ketoacyl synthase activity residues include Cys-283, His-418, and His-458. A disordered region spans residues 538-563; it reads APEPERPHAPEADGEPRPLPWPVSGH. Over residues 540–553 the composition is skewed to basic and acidic residues; the sequence is EPERPHAPEADGEP. Residues 644–962 enclose the Malonyl-CoA:ACP transacylase (MAT) domain; that stretch reads FVFPGQGSQW…VAEAHVHGVA (319 aa). Positions 1012-1139 are N-terminal hotdog fold; sequence HPLLGAAIPL…GTLAPGGGHP (128 aa). The PKS/mFAS DH domain occupies 1012–1289; sequence HPLLGAAIPL…MRPVTAEALH (278 aa). The Proton acceptor; for dehydratase activity role is filled by His-1045. The interval 1113 to 1152 is disordered; sequence SRPEDAGADEPWTRHAEGTLAPGGGHPRQDPGPWPPTGAR. The segment at 1151–1289 is C-terminal hotdog fold; that stretch reads AREIDLDDCY…MRPVTAEALH (139 aa). Asp-1211 (proton donor; for dehydratase activity) is an active-site residue. Positions 1494-1671 constitute a Ketoreductase (KR) domain; it reads GTVLVTGGLG…GVSMGWGMWA (178 aa). Positions 1777 to 1852 constitute a Carrier domain; sequence ALLLGVVRGH…ALSRYLRTLL (76 aa). At Ser-1812 the chain carries O-(pantetheine 4'-phosphoryl)serine. Positions 1854–1873 are disordered; it reads PDPAPAPTAPDGQPGPDQAD. Positions 1862 to 1871 are enriched in low complexity; the sequence is APDGQPGPDQ.

In terms of assembly, the spectinabilin polyketide synthase complex is composed of 4 proteins, NorA, NorA', NorB and NorC. The complex comprises 6 modules with a total of 28 catalytic domains catalyzing 7 chain elongations. NorA comprises one module, NorA' two modules, NorB one module and NorC two modules. Pantetheine 4'-phosphate is required as a cofactor.

It catalyses the reaction 4-nitrobenzoyl-CoA + 6 (S)-methylmalonyl-CoA + malonyl-CoA + 6 NADPH + 12 H(+) = demethyldeoxyspectinabilin + 7 CO2 + 6 NADP(+) + 8 CoA + 5 H2O. Its pathway is antibiotic biosynthesis. The protein operates within polyketide biosynthesis. In terms of biological role, component of a type I modular polyketide synthase (PKS) that generates the backbone of the antibiotic spectinabilin (also known as neoaureothin), a nitroaryl-substituted polyketide metabolite. This PKS system accepts the unusual starter unit 4-nitrobenzoyl-CoA and extends it by 6 molecules of (S)-methylmalonyl-CoA and a single molecule of malonyl-CoA. The first module, NorA, is used twice in an iterative fashion. The polypeptide is Spectinabilin polyketide synthase system protein NorA (Streptomyces orinoci (Streptoverticillium orinoci)).